An 84-amino-acid polypeptide reads, in one-letter code: MPKKAASPEIKAASFETSLSELEQIVTRLESGELPLEDALNEFERGVQLARQGQQTLLQAEQRVQILLSDDVDAPLKPFTPDTE.

The protein belongs to the XseB family. Heterooligomer composed of large and small subunits.

The protein localises to the cytoplasm. It carries out the reaction Exonucleolytic cleavage in either 5'- to 3'- or 3'- to 5'-direction to yield nucleoside 5'-phosphates.. Functionally, bidirectionally degrades single-stranded DNA into large acid-insoluble oligonucleotides, which are then degraded further into small acid-soluble oligonucleotides. In Yersinia pseudotuberculosis serotype O:1b (strain IP 31758), this protein is Exodeoxyribonuclease 7 small subunit.